We begin with the raw amino-acid sequence, 320 residues long: Meso-diaminopimelate D-dehydrogenase (320 aa).

NADP(+) contacts are provided by residues 11–14 (YGNL), 35–37 (SRR), 65–68 (CMGS), 88–90 (TYD), and 117–121 (TGWDP). Substrate contacts are provided by residues D90, D120, W144, 150–151 (QG), T169, R195, H244, and N270.

In terms of assembly, homodimer.

It catalyses the reaction meso-2,6-diaminopimelate + NADP(+) + H2O = (S)-2-amino-6-oxoheptanedioate + NH4(+) + NADPH + H(+). It functions in the pathway amino-acid biosynthesis; L-lysine biosynthesis via DAP pathway; DL-2,6-diaminopimelate from (S)-tetrahydrodipicolinate: step 1/1. With respect to regulation, l,L-2,6-diaminopimelate and D,D-2,6-diaminopimelate competitively inhibit the oxidative deamination of meso-2,6-diaminopimelate. The enzyme is also inhibited by L-cysteine, and by p-chloromercuribenzoate, iodoacetic acid and HgCl(2) in vitro. Its function is as follows. Catalyzes the reversible NADPH-dependent reductive amination of L-2-amino-6-oxopimelate, the acyclic form of L-tetrahydrodipicolinate, to generate the meso compound, D,L-2,6-diaminopimelate. Probably plays a role in lysine biosynthesis. Exhibits a high substrate specificity for meso-2,6-diaminopimelate, since L,L-2,6-diaminopimelate, D,D-2,6-diaminopimelate, L-glutamate, L-alanine, L-leucine, L-valine, L-aspartate, L-threonine, L-homoserine, L-methionine, L-lysine, L-serine, L-phenylalanine, L-tyrosine, L-tryptophan, L-ornithine, L-histidine, L-arginine, D-glutamate, and D-alanine are not substrates for the oxidative deamination reaction. Can use NAD(+) only poorly since the activity observed in the presence of NAD(+) is about 3% of that with NADP(+). This chain is Meso-diaminopimelate D-dehydrogenase (ddh), found in Corynebacterium glutamicum (strain ATCC 13032 / DSM 20300 / JCM 1318 / BCRC 11384 / CCUG 27702 / LMG 3730 / NBRC 12168 / NCIMB 10025 / NRRL B-2784 / 534).